An 877-amino-acid chain; its full sequence is DNA mismatch repair protein MutS (877 aa).

Residue 630 to 637 coordinates ATP; sequence GPNMAGKS.

The protein belongs to the DNA mismatch repair MutS family.

Its function is as follows. This protein is involved in the repair of mismatches in DNA. It is possible that it carries out the mismatch recognition step. This protein has a weak ATPase activity. This is DNA mismatch repair protein MutS from Ruegeria pomeroyi (strain ATCC 700808 / DSM 15171 / DSS-3) (Silicibacter pomeroyi).